Here is a 69-residue protein sequence, read N- to C-terminus: Mu-conotoxin-like Am3.3 (69 aa).

The N-terminal stretch at 1 to 20 (MMSKLGVLLTICLLLFPLTA) is a signal peptide. Residues 21-52 (VPLDGDQPADRPAERMQDDISSENHPMFDAIR) constitute a propeptide that is removed on maturation. Cysteine 68 is modified (cysteine amide).

It belongs to the conotoxin M family. Post-translationally, is not hydroxylated. Contains 3 disulfide bonds. Expressed by the venom duct.

The protein resides in the secreted. Its function is as follows. Mu-conotoxins block voltage-gated sodium channels (Nav). This chain is Mu-conotoxin-like Am3.3, found in Conus amadis (Amadis cone).